The primary structure comprises 384 residues: Urea transporter 1 (384 aa).

Glutamate 39 is subject to Phosphoserine. 5 consecutive transmembrane segments (helical) span residues 61–81 (ISQV…VGLL), 85–105 (PWWA…ALLL), 111–131 (AIAA…MAVF), 138–158 (FWWL…FSSA), and 168–188 (LPVF…ATGH). An N-linked (GlcNAc...) asparagine glycan is attached at asparagine 206. The next 4 membrane-spanning stretches (helical) occupy residues 250 to 270 (LMCL…LSLA), 276 to 296 (IYFG…GGMF), 305 to 325 (LLAL…AHLM), and 327 to 347 (VVHL…FLLL).

Belongs to the urea transporter family. Homotrimer; each subunit contains a pore through which urea permeates. Identified in a complex with STOM. In terms of processing, N-glycosylated in red blood cells, as well as in most non-erythroid tissues, except in the gastrocnemius muscle and in the gastrointestinal tract, including liver, colon and stomach. As to expression, expressed in brain, kidney, heart, liver, lung, skeletal muscle, spleen, testis, ureter and urinary bladder (at protein level). Along the gastrointestinal tract, detected in colon, jejunum and stomach (at protein level). In the kidney, expressed in some microvessels of the inner and outer medulla, but not all (at protein level). Not detected in the cortex (at protein level). Detected in the urothelium all along the urinary tract, including the papilla surface, the ureter, the bladder and the urethra (at protein level). In the brain, expressed at the border of the corpus callosum and striatum in astrocytic cellular processes surrounding blood microvessels (at protein level). Detected in erythrocytes (at protein level).

It is found in the cell membrane. Its subcellular location is the basolateral cell membrane. The enzyme catalyses urea(in) = urea(out). Functionally, mediates the transport of urea driven by a concentration gradient across the cell membranes of erythrocytes and the renal inner medullary collecting duct which is critical to the urinary concentrating mechanism. Facilitates water transport in erythrocytes. This Mus musculus (Mouse) protein is Urea transporter 1 (Slc14a1).